The sequence spans 898 residues: Zinc finger protein 574 (898 aa).

3 consecutive C2H2-type zinc fingers follow at residues 16 to 38 (YVCS…QNSH), 76 to 98 (YQCL…QELH), and 126 to 148 (YECV…RQTH). The residue at position 164 (serine 164) is a Phosphoserine. The segment at 213-235 (YKCSECSQLFQMPADFLEHQATH) adopts a C2H2-type 4 zinc-finger fold. The segment at 243 to 305 (AEEPATQQET…PRRSSSGESG (63 aa)) is disordered. Residues 273–290 (HSYELRNELRNGEAMGRD) show a composition bias toward basic and acidic residues. A Phosphoserine modification is found at serine 301. 4 consecutive C2H2-type zinc fingers follow at residues 310 to 332 (LFCS…LRSH), 337 to 359 (FKCP…LGDH), 365 to 387 (FLCV…RRAH), and 393 to 414 (HSCP…RRTH). Positions 417–460 (GGVPLPTTPVPPEEPAISFPEPAPAETGELEAPELPVSEESSAE) are disordered. C2H2-type zinc fingers lie at residues 467-490 (YRCL…RFVH), 496-518 (HKCS…LRTH), 524-546 (FPCP…RLTH), 552-574 (YRCG…RLVH), 580-602 (YRCQ…RYHH), and 608-631 (YKCR…LVVH). The C2H2-type 15; degenerate zinc-finger motif lies at 637–660 (HRCPSCGAAFPSSLRLREHRCAAA). A C2H2-type 16 zinc finger spans residues 668–690 (FECGTCGKKVGSAARLQAHEAAH). The interval 691 to 735 (AAAGPGEVLAKEPPAPRAARATRTPVAPSPTALGGTTSAAPAAPA) is disordered. The segment covering 707–734 (RAARATRTPVAPSPTALGGTTSAAPAAP) has biased composition (low complexity). Serine 719 bears the Phosphoserine mark. Residue threonine 726 is modified to Phosphothreonine. C2H2-type zinc fingers lie at residues 740–762 (LECS…RRIH), 768–790 (YPCP…RRLH), 796–818 (FACE…RRIH), and 824–846 (YSCP…RKTH). Arginine 834 bears the Asymmetric dimethylarginine mark.

Belongs to the krueppel C2H2-type zinc-finger protein family.

It localises to the nucleus. May be involved in transcriptional regulation. In Rattus norvegicus (Rat), this protein is Zinc finger protein 574 (Znf574).